Here is a 137-residue protein sequence, read N- to C-terminus: Partner of bursicon (137 aa).

Residues Met-1–Ala-24 form the signal peptide. 5 disulfide bridges follow: Cys-28–Cys-86, Cys-52–Cys-101, Cys-61–Cys-127, Cys-65–Cys-129, and Cys-83–Cys-132. The 96-residue stretch at Cys-28–Glu-123 folds into the CTCK domain.

As to quaternary structure, heterodimer of burs and pburs.

The protein resides in the secreted. Its function is as follows. Final heterodimeric neurohormone released at the end of the molting cycle, involved in the sclerotization (tanning) of the insect cuticle, melanization and wing spreading. The chain is Partner of bursicon from Bombyx mori (Silk moth).